Reading from the N-terminus, the 197-residue chain is A-type ATP synthase subunit E 2 (197 aa).

The protein belongs to the V-ATPase E subunit family. In terms of assembly, has multiple subunits with at least A(3), B(3), C, D, E, F, H, I and proteolipid K(x).

It localises to the cell membrane. In terms of biological role, component of the A-type ATP synthase that produces ATP from ADP in the presence of a proton gradient across the membrane. The polypeptide is A-type ATP synthase subunit E 2 (Methanospirillum hungatei JF-1 (strain ATCC 27890 / DSM 864 / NBRC 100397 / JF-1)).